Here is a 255-residue protein sequence, read N- to C-terminus: uncharacterized protein (255 aa).

Belongs to the methyltransferase superfamily.

This is an uncharacterized protein from Mycobacterium marinum (strain ATCC BAA-535 / M).